A 169-amino-acid polypeptide reads, in one-letter code: Putative tRNA (cytidine(34)-2'-O)-methyltransferase (169 aa).

Positions 79, 104, 125, and 133 each coordinate S-adenosyl-L-methionine.

The protein belongs to the class IV-like SAM-binding methyltransferase superfamily. RNA methyltransferase TrmH family. TrmL subfamily.

It localises to the cytoplasm. The enzyme catalyses cytidine(34) in tRNA + S-adenosyl-L-methionine = 2'-O-methylcytidine(34) in tRNA + S-adenosyl-L-homocysteine + H(+). The catalysed reaction is 5-carboxymethylaminomethyluridine(34) in tRNA(Leu) + S-adenosyl-L-methionine = 5-carboxymethylaminomethyl-2'-O-methyluridine(34) in tRNA(Leu) + S-adenosyl-L-homocysteine + H(+). Could methylate the ribose at the nucleotide 34 wobble position in tRNA. The protein is Putative tRNA (cytidine(34)-2'-O)-methyltransferase of Listeria monocytogenes serotype 4b (strain F2365).